The primary structure comprises 353 residues: Phosphate acyltransferase (353 aa).

It belongs to the PlsX family. In terms of assembly, homodimer. Probably interacts with PlsY.

The protein resides in the cytoplasm. The enzyme catalyses a fatty acyl-[ACP] + phosphate = an acyl phosphate + holo-[ACP]. The protein operates within lipid metabolism; phospholipid metabolism. In terms of biological role, catalyzes the reversible formation of acyl-phosphate (acyl-PO(4)) from acyl-[acyl-carrier-protein] (acyl-ACP). This enzyme utilizes acyl-ACP as fatty acyl donor, but not acyl-CoA. The sequence is that of Phosphate acyltransferase from Ralstonia pickettii (strain 12J).